The following is a 568-amino-acid chain: Urease subunit alpha (568 aa).

In terms of domain architecture, Urease spans 130–568 (GGIDTHIHFI…LPMAQRYFLF (439 aa)). Positions 135, 137, and 218 each coordinate Ni(2+). Lys218 carries the post-translational modification N6-carboxylysine. His220 contacts substrate. The Ni(2+) site is built by His247 and His273. His321 (proton donor) is an active-site residue. A Ni(2+)-binding site is contributed by Asp361.

This sequence belongs to the metallo-dependent hydrolases superfamily. Urease alpha subunit family. In terms of assembly, heterotrimer of UreA (gamma), UreB (beta) and UreC (alpha) subunits. Three heterotrimers associate to form the active enzyme. It depends on Ni cation as a cofactor. In terms of processing, carboxylation allows a single lysine to coordinate two nickel ions.

The protein resides in the cytoplasm. The catalysed reaction is urea + 2 H2O + H(+) = hydrogencarbonate + 2 NH4(+). It participates in nitrogen metabolism; urea degradation; CO(2) and NH(3) from urea (urease route): step 1/1. This Burkholderia mallei (strain NCTC 10247) protein is Urease subunit alpha.